Reading from the N-terminus, the 1651-residue chain is Alsin (1651 aa).

RCC1 repeat units follow at residues 59–108, 109–167, and 169–218; these read DGEV…AVTE, SGVV…ALSI, and REIW…ALVQ. Residues 444–476 are disordered; the sequence is REEQVKQESLQGKKSSSLMDIREEESEGGSRRL. Over residues 450-461 the composition is skewed to polar residues; that stretch reads QESLQGKKSSSL. Residues Ser-459, Ser-460, Ser-477, and Ser-486 each carry the phosphoserine modification. Thr-504 carries the post-translational modification Phosphothreonine. 2 RCC1 repeats span residues 519–570 and 572–621; these read RTEV…ALTA and SQVY…FLVD. The residue at position 527 (Lys-527) is an N6-acetyllysine. Positions 684-879 constitute a DH domain; that stretch reads GYIASLHELA…ESLALHLGKK (196 aa). Residues 895-1001 form the PH domain; sequence GKMTDSLRKP…RAISQAVDQA (107 aa). MORN repeat units follow at residues 1043–1065, 1066–1088, 1094–1116, 1117–1139, 1145–1167, 1169–1191, 1192–1214, and 1215–1238; these read YDGRWLSGKPHGRGVLKWPDGKV, YSGTFRNGLEDGYGEYRIPNKAL, YVGHWKEGKMCGQGVYSYASGEV, FEGCFQDNMRHGHGLLRSGKLTS, FIGQWVMDKKAGYGVFDDITRGE, YMGMWQDDACQGNGVVVTQFGLY, YEGNFHLNKMMGNGVLLSEDDTI, and YEGEFSDDWTLCGKGTLTMPNGDY. Ser-1329 bears the Phosphoserine mark. Positions 1507 to 1651 constitute a VPS9 domain; sequence KQPDIALLGF…YYQIQREKLN (145 aa).

In terms of assembly, forms a heteromeric complex with ALS2CL. Interacts with ALS2CL.

May act as a GTPase regulator. Controls survival and growth of spinal motoneurons. The chain is Alsin (Als2) from Rattus norvegicus (Rat).